Here is a 1217-residue protein sequence, read N- to C-terminus: ATP-dependent RNA helicase DHX30 (1217 aa).

A phosphoserine mark is found at aspartate 15 and serine 29. The DRBM domain maps to 76 to 144; that stretch reads PKNLLNSVIG…QAAAAACQLF (69 aa). Positions 176 to 223 are disordered; sequence WWRPEPTMPPTSWRQLNPENIRPGGPAGLSRSLGREEEEDEEEELEEG. Over residues 211–223 the composition is skewed to acidic residues; that stretch reads EEEEDEEEELEEG. 2 positions are modified to phosphoserine: serine 249 and serine 403. Residues 467 to 635 enclose the Helicase ATP-binding domain; sequence LSAIEQHPVV…FGGCPVIKVP (169 aa). Residue 480 to 487 coordinates ATP; sequence GDTGCGKT. Positions 582–585 match the DEAH box motif; that stretch reads DEVH. The 174-residue stretch at 677–850 folds into the Helicase C-terminal domain; it reads LVTDLVLHID…NLVLQAKIHM (174 aa).

Belongs to the DEAD box helicase family. DEAH subfamily. Identified in a complex with TFAM and SSBP1. Interacts (via N-terminus) with ZC3HAV1 (via N-terminal domain) in an RNA-independent manner. Found in a complex with GRSF1, DDX28, FASTKD2 and FASTKD5. Phosphorylated on Ser-15. In terms of tissue distribution, expressed in the heart, brain, spleen, lung, liver, skeletal muscle, kidney, and testis. Expression is strongest in the testis and brain, while the lowest levels of expression are found in the spleen and lung.

Its subcellular location is the cytoplasm. The protein resides in the mitochondrion. The protein localises to the mitochondrion matrix. It is found in the mitochondrion nucleoid. It carries out the reaction ATP + H2O = ADP + phosphate + H(+). RNA-dependent helicase. Plays an important role in the assembly of the mitochondrial large ribosomal subunit. Required for optimal function of the zinc-finger antiviral protein ZC3HAV1. Associates with mitochondrial DNA. Involved in nervous system development and differentiation through its involvement in the up-regulation of a number of genes which are required for neurogenesis, including GSC, NCAM1, neurogenin, and NEUROD. The protein is ATP-dependent RNA helicase DHX30 (Dhx30) of Mus musculus (Mouse).